A 492-amino-acid polypeptide reads, in one-letter code: Probable cytosol aminopeptidase (492 aa).

Mn(2+) contacts are provided by K262 and D267. Residue K274 is part of the active site. D286, D345, and E347 together coordinate Mn(2+). The active site involves R349.

Belongs to the peptidase M17 family. Mn(2+) is required as a cofactor.

It localises to the cytoplasm. It carries out the reaction Release of an N-terminal amino acid, Xaa-|-Yaa-, in which Xaa is preferably Leu, but may be other amino acids including Pro although not Arg or Lys, and Yaa may be Pro. Amino acid amides and methyl esters are also readily hydrolyzed, but rates on arylamides are exceedingly low.. The catalysed reaction is Release of an N-terminal amino acid, preferentially leucine, but not glutamic or aspartic acids.. Functionally, presumably involved in the processing and regular turnover of intracellular proteins. Catalyzes the removal of unsubstituted N-terminal amino acids from various peptides. In Acaryochloris marina (strain MBIC 11017), this protein is Probable cytosol aminopeptidase.